Here is a 663-residue protein sequence, read N- to C-terminus: Oligopeptide-binding protein SarA (663 aa).

An N-terminal signal peptide occupies residues 1–22; the sequence is MKKGKILALAGVALLATGVLAA. C23 carries the N-palmitoyl cysteine lipid modification. C23 is lipidated: S-diacylglycerol cysteine. A disordered region spans residues 637 to 663; it reads QKAQEKWNKERAESNKKAQEELEKHVK.

The protein belongs to the bacterial solute-binding protein 5 family.

Its subcellular location is the cell membrane. May be involved in the expression of cell surface properties important for colonization of the human oral cavity. It may also be involved in uptake processes. The polypeptide is Oligopeptide-binding protein SarA (sarA) (Streptococcus gordonii (strain Challis / ATCC 35105 / BCRC 15272 / CH1 / DL1 / V288)).